We begin with the raw amino-acid sequence, 283 residues long: Pantothenate synthetase (283 aa).

30–37 serves as a coordination point for ATP; it reads MGNLHDAH. The Proton donor role is filled by histidine 37. (R)-pantoate is bound at residue glutamine 61. Glutamine 61 contacts beta-alanine. Residue 149-152 participates in ATP binding; that stretch reads GVKD. Residue glutamine 155 participates in (R)-pantoate binding. Residues valine 178 and 186-189 each bind ATP; that span reads MSSR.

It belongs to the pantothenate synthetase family. As to quaternary structure, homodimer.

It is found in the cytoplasm. The enzyme catalyses (R)-pantoate + beta-alanine + ATP = (R)-pantothenate + AMP + diphosphate + H(+). It participates in cofactor biosynthesis; (R)-pantothenate biosynthesis; (R)-pantothenate from (R)-pantoate and beta-alanine: step 1/1. Its function is as follows. Catalyzes the condensation of pantoate with beta-alanine in an ATP-dependent reaction via a pantoyl-adenylate intermediate. The polypeptide is Pantothenate synthetase (Cellvibrio japonicus (strain Ueda107) (Pseudomonas fluorescens subsp. cellulosa)).